Consider the following 377-residue polypeptide: Histidinol-phosphate aminotransferase 2 (377 aa).

The segment at asparagine 17 to proline 44 is disordered. At lysine 228 the chain carries N6-(pyridoxal phosphate)lysine.

Belongs to the class-II pyridoxal-phosphate-dependent aminotransferase family. Histidinol-phosphate aminotransferase subfamily. Homodimer. Pyridoxal 5'-phosphate serves as cofactor.

It catalyses the reaction L-histidinol phosphate + 2-oxoglutarate = 3-(imidazol-4-yl)-2-oxopropyl phosphate + L-glutamate. It participates in amino-acid biosynthesis; L-histidine biosynthesis; L-histidine from 5-phospho-alpha-D-ribose 1-diphosphate: step 7/9. This Psychrobacter arcticus (strain DSM 17307 / VKM B-2377 / 273-4) protein is Histidinol-phosphate aminotransferase 2.